We begin with the raw amino-acid sequence, 308 residues long: MKVIFAGTPDFAAAALRAVAAAGFEIPLVLTQPDRPKGRGMQLTAPPVKQAALELGLRVEQPEKLRNNAEALQMLKEVEADVMVVAAYGLILPQDVLDVPKHGCLNIHASLLPRWRGAAPIQRAIEAGDAETGVCIMQMDAGLDTGDVVSEHRYAIRPTDTANEVHDALMEIGAAAVVADLQQLQSKGRLNAVKQPKEGVTYAQKLSKEEARIDWSESAAVIERKIRAFNPVPAAWVEYQGKPMKIRRAEVVAQQGAAGEVLSCSADGLVVACGENALKITELQPAGGKRMSIQAFAAGRTIEVGTVL.

Position 110-113 (110-113) interacts with (6S)-5,6,7,8-tetrahydrofolate; that stretch reads SLLP.

The protein belongs to the Fmt family.

The enzyme catalyses L-methionyl-tRNA(fMet) + (6R)-10-formyltetrahydrofolate = N-formyl-L-methionyl-tRNA(fMet) + (6S)-5,6,7,8-tetrahydrofolate + H(+). In terms of biological role, attaches a formyl group to the free amino group of methionyl-tRNA(fMet). The formyl group appears to play a dual role in the initiator identity of N-formylmethionyl-tRNA by promoting its recognition by IF2 and preventing the misappropriation of this tRNA by the elongation apparatus. The polypeptide is Methionyl-tRNA formyltransferase (Neisseria meningitidis serogroup C (strain 053442)).